The sequence spans 451 residues: Trigger factor (451 aa).

The PPIase FKBP-type domain occupies 165–250 (DDKLTIDFEG…LRQIQAREAL (86 aa)).

It belongs to the FKBP-type PPIase family. Tig subfamily.

It localises to the cytoplasm. The enzyme catalyses [protein]-peptidylproline (omega=180) = [protein]-peptidylproline (omega=0). In terms of biological role, involved in protein export. Acts as a chaperone by maintaining the newly synthesized protein in an open conformation. Functions as a peptidyl-prolyl cis-trans isomerase. The protein is Trigger factor of Helicobacter pylori (strain Shi470).